A 165-amino-acid polypeptide reads, in one-letter code: Transcription antitermination protein NusB (165 aa).

The protein belongs to the NusB family.

Involved in transcription antitermination. Required for transcription of ribosomal RNA (rRNA) genes. Binds specifically to the boxA antiterminator sequence of the ribosomal RNA (rrn) operons. The sequence is that of Transcription antitermination protein NusB from Chlorobium phaeobacteroides (strain DSM 266 / SMG 266 / 2430).